The following is a 373-amino-acid chain: Probable cysteine protease RD19C (373 aa).

An N-terminal signal peptide occupies residues 1–20 (MDRVVFFFLIAATLLAGSLG). A propeptide spans 21–139 (STVISGEVTD…QTAPILPTSD (119 aa)) (activation peptide). Intrachain disulfides connect Cys161–Cys211 and Cys195–Cys245. Residue Cys164 is part of the active site. A glycan (N-linked (GlcNAc...) asparagine) is linked at Asn258. The cysteines at positions 301 and 356 are disulfide-linked. Active-site residues include His307 and Asn334.

The protein belongs to the peptidase C1 family.

The protein resides in the lytic vacuole. Its function is as follows. Probable thiol protease. The sequence is that of Probable cysteine protease RD19C from Arabidopsis thaliana (Mouse-ear cress).